Consider the following 364-residue polypeptide: Protein-glutamate methylesterase/protein-glutamine glutaminase 3 (364 aa).

Residues 7–124 (RVLIVDDSAS…THALLEASAR (118 aa)) form the Response regulatory domain. Residue aspartate 58 is modified to 4-aspartylphosphate. The CheB-type methylesterase domain maps to 167 to 358 (PTTERLVCIG…REIMLWQDAK (192 aa)). Active-site residues include serine 178, histidine 204, and aspartate 300.

It belongs to the CheB family. In terms of processing, phosphorylated by CheA. Phosphorylation of the N-terminal regulatory domain activates the methylesterase activity.

The protein resides in the cytoplasm. The enzyme catalyses [protein]-L-glutamate 5-O-methyl ester + H2O = L-glutamyl-[protein] + methanol + H(+). The catalysed reaction is L-glutaminyl-[protein] + H2O = L-glutamyl-[protein] + NH4(+). Involved in chemotaxis. Part of a chemotaxis signal transduction system that modulates chemotaxis in response to various stimuli. Catalyzes the demethylation of specific methylglutamate residues introduced into the chemoreceptors (methyl-accepting chemotaxis proteins or MCP) by CheR. Also mediates the irreversible deamidation of specific glutamine residues to glutamic acid. The protein is Protein-glutamate methylesterase/protein-glutamine glutaminase 3 of Rhodopseudomonas palustris (strain BisB18).